Reading from the N-terminus, the 498-residue chain is ATP synthase subunit beta, chloroplastic (498 aa).

172–179 contacts ATP; that stretch reads GGAGVGKT.

This sequence belongs to the ATPase alpha/beta chains family. F-type ATPases have 2 components, CF(1) - the catalytic core - and CF(0) - the membrane proton channel. CF(1) has five subunits: alpha(3), beta(3), gamma(1), delta(1), epsilon(1). CF(0) has four main subunits: a(1), b(1), b'(1) and c(9-12).

It localises to the plastid. It is found in the chloroplast thylakoid membrane. The catalysed reaction is ATP + H2O + 4 H(+)(in) = ADP + phosphate + 5 H(+)(out). In terms of biological role, produces ATP from ADP in the presence of a proton gradient across the membrane. The catalytic sites are hosted primarily by the beta subunits. In Castanea sativa (Sweet chestnut), this protein is ATP synthase subunit beta, chloroplastic.